The following is a 398-amino-acid chain: Cytochrome b (398 aa).

Residues 45–65 form a helical membrane-spanning segment; that stretch reads LGSIAGIALVIQIITGVILAM. Heme b-binding residues include His-95 and His-109. 8 consecutive transmembrane segments (helical) span residues 97–117, 129–149, 164–184, 192–212, 245–265, 304–324, 335–355, and 364–384; these read VGAS…LYYG, IGII…VLPW, FSAI…GFSV, FFSL…LHLL, FVGF…EPNY, LAGV…PWLD, PIYR…GYLG, and IIIS…VLPL. His-196 and His-210 together coordinate heme b.

The protein belongs to the cytochrome b family. In terms of assembly, the main subunits of complex b-c1 are: cytochrome b, cytochrome c1 and the Rieske protein. It depends on heme b as a cofactor.

Its subcellular location is the cell membrane. Functionally, component of the ubiquinol-cytochrome c reductase complex (complex III or cytochrome b-c1 complex), which is a respiratory chain that generates an electrochemical potential coupled to ATP synthesis. The sequence is that of Cytochrome b (petB) from Rickettsia typhi (strain ATCC VR-144 / Wilmington).